The primary structure comprises 207 residues: Guanylate kinase (207 aa).

The Guanylate kinase-like domain maps to 4–184 (GTLYIVSAPS…ALTDLKTIIR (181 aa)). Position 11–18 (11–18 (APSGAGKS)) interacts with ATP.

Belongs to the guanylate kinase family.

Its subcellular location is the cytoplasm. The catalysed reaction is GMP + ATP = GDP + ADP. Its function is as follows. Essential for recycling GMP and indirectly, cGMP. In Escherichia coli O6:K15:H31 (strain 536 / UPEC), this protein is Guanylate kinase.